We begin with the raw amino-acid sequence, 146 residues long: D-aminoacyl-tRNA deacylase (146 aa).

The Gly-cisPro motif, important for rejection of L-amino acids signature appears at 138–139 (GP).

Belongs to the DTD family. As to quaternary structure, homodimer.

The protein resides in the cytoplasm. It catalyses the reaction glycyl-tRNA(Ala) + H2O = tRNA(Ala) + glycine + H(+). It carries out the reaction a D-aminoacyl-tRNA + H2O = a tRNA + a D-alpha-amino acid + H(+). Its function is as follows. An aminoacyl-tRNA editing enzyme that deacylates mischarged D-aminoacyl-tRNAs. Also deacylates mischarged glycyl-tRNA(Ala), protecting cells against glycine mischarging by AlaRS. Acts via tRNA-based rather than protein-based catalysis; rejects L-amino acids rather than detecting D-amino acids in the active site. By recycling D-aminoacyl-tRNA to D-amino acids and free tRNA molecules, this enzyme counteracts the toxicity associated with the formation of D-aminoacyl-tRNA entities in vivo and helps enforce protein L-homochirality. The protein is D-aminoacyl-tRNA deacylase of Stenotrophomonas maltophilia (strain R551-3).